A 100-amino-acid polypeptide reads, in one-letter code: Transcription elongation factor A protein-like 7 (100 aa).

Residues 1–32 (MQKPCKENEGKPKCSVPKREEKRPYGEFERQQ) are compositionally biased toward basic and acidic residues. Residues 1–34 (MQKPCKENEGKPKCSVPKREEKRPYGEFERQQTE) are disordered. Residues 60–88 (EEMTREGDEMERCLEEIRGLRKKFRALHS) are a coiled coil.

It belongs to the TFS-II family. TFA subfamily. In terms of tissue distribution, highly expressed in normal and fetal brain tissues, and weakly expressed in uterus and ovary. Down-regulated in epithelial ovarian, cervical, prostate, breast, brain and lung cancer cell lines and in brain and ovarian tumors.

The protein resides in the nucleus. Its function is as follows. Plays a role in the negative regulation of NF-kappa-B signaling at the basal level by modulating transcriptional activity of NF-kappa-B on its target gene promoters. Associates with cyclin D1 promoter containing Myc E-box sequence and transcriptionally represses cyclin D1 expression. Regulates telomerase reverse transcriptase expression and telomerase activity in both ALT (alternative lengthening of telomeres)and telomerase-positive cell lines. This chain is Transcription elongation factor A protein-like 7 (TCEAL7), found in Homo sapiens (Human).